Reading from the N-terminus, the 213-residue chain is Imidazole glycerol phosphate synthase subunit HisH (213 aa).

Residues 4–213 (SIAIVDYGMG…LYRNFVHWNP (210 aa)) form the Glutamine amidotransferase type-1 domain. Cys83 serves as the catalytic Nucleophile. Residues His193 and Glu195 contribute to the active site.

As to quaternary structure, heterodimer of HisH and HisF.

The protein localises to the cytoplasm. The catalysed reaction is 5-[(5-phospho-1-deoxy-D-ribulos-1-ylimino)methylamino]-1-(5-phospho-beta-D-ribosyl)imidazole-4-carboxamide + L-glutamine = D-erythro-1-(imidazol-4-yl)glycerol 3-phosphate + 5-amino-1-(5-phospho-beta-D-ribosyl)imidazole-4-carboxamide + L-glutamate + H(+). The enzyme catalyses L-glutamine + H2O = L-glutamate + NH4(+). It participates in amino-acid biosynthesis; L-histidine biosynthesis; L-histidine from 5-phospho-alpha-D-ribose 1-diphosphate: step 5/9. IGPS catalyzes the conversion of PRFAR and glutamine to IGP, AICAR and glutamate. The HisH subunit catalyzes the hydrolysis of glutamine to glutamate and ammonia as part of the synthesis of IGP and AICAR. The resulting ammonia molecule is channeled to the active site of HisF. In Burkholderia pseudomallei (strain K96243), this protein is Imidazole glycerol phosphate synthase subunit HisH.